The primary structure comprises 303 residues: Eukaryotic translation initiation factor 3 subunit G (303 aa).

Disordered stretches follow at residues methionine 1–valine 32, glycine 81–asparagine 100, proline 105–lysine 126, and glycine 181–lysine 215. A compositionally biased stretch (basic and acidic residues) spans tryptophan 109–lysine 126. The region spanning alanine 223–lysine 301 is the RRM domain.

It belongs to the eIF-3 subunit G family. In terms of assembly, component of the eukaryotic translation initiation factor 3 (eIF-3) complex.

It is found in the cytoplasm. RNA-binding component of the eukaryotic translation initiation factor 3 (eIF-3) complex, which is involved in protein synthesis of a specialized repertoire of mRNAs and, together with other initiation factors, stimulates binding of mRNA and methionyl-tRNAi to the 40S ribosome. The eIF-3 complex specifically targets and initiates translation of a subset of mRNAs involved in cell proliferation. This subunit can bind 18S rRNA. The sequence is that of Eukaryotic translation initiation factor 3 subunit G from Pyricularia oryzae (strain 70-15 / ATCC MYA-4617 / FGSC 8958) (Rice blast fungus).